The chain runs to 165 residues: Peptide methionine sulfoxide reductase MsrA (165 aa).

Residue Cys-10 is part of the active site.

This sequence belongs to the MsrA Met sulfoxide reductase family.

It catalyses the reaction L-methionyl-[protein] + [thioredoxin]-disulfide + H2O = L-methionyl-(S)-S-oxide-[protein] + [thioredoxin]-dithiol. It carries out the reaction [thioredoxin]-disulfide + L-methionine + H2O = L-methionine (S)-S-oxide + [thioredoxin]-dithiol. Functionally, has an important function as a repair enzyme for proteins that have been inactivated by oxidation. Catalyzes the reversible oxidation-reduction of methionine sulfoxide in proteins to methionine. In Campylobacter jejuni subsp. jejuni serotype O:6 (strain 81116 / NCTC 11828), this protein is Peptide methionine sulfoxide reductase MsrA.